We begin with the raw amino-acid sequence, 81 residues long: uncharacterized protein (81 aa).

This is an uncharacterized protein from Caenorhabditis elegans.